We begin with the raw amino-acid sequence, 255 residues long: Octanoyltransferase (255 aa).

The BPL/LPL catalytic domain maps to 54–238; sequence GDANELVWLL…SFTTIFGATV (185 aa). Residues 92 to 99, 167 to 169, and 180 to 182 contribute to the substrate site; these read RGGQLTYH, AIG, and GIA. The active-site Acyl-thioester intermediate is the Cys198.

Belongs to the LipB family.

It localises to the cytoplasm. The catalysed reaction is octanoyl-[ACP] + L-lysyl-[protein] = N(6)-octanoyl-L-lysyl-[protein] + holo-[ACP] + H(+). It participates in protein modification; protein lipoylation via endogenous pathway; protein N(6)-(lipoyl)lysine from octanoyl-[acyl-carrier-protein]: step 1/2. Functionally, catalyzes the transfer of endogenously produced octanoic acid from octanoyl-acyl-carrier-protein onto the lipoyl domains of lipoate-dependent enzymes. Lipoyl-ACP can also act as a substrate although octanoyl-ACP is likely to be the physiological substrate. This chain is Octanoyltransferase, found in Rhodopseudomonas palustris (strain BisB5).